A 453-amino-acid polypeptide reads, in one-letter code: UDP-glycosyltransferase 76E9 (453 aa).

UDP-alpha-D-glucose is bound by residues Ser-279, 337 to 339 (APQ), 354 to 362 (HCGWNSTLE), and 376 to 379 (TTDQ).

Belongs to the UDP-glycosyltransferase family.

In Arabidopsis thaliana (Mouse-ear cress), this protein is UDP-glycosyltransferase 76E9 (UGT76E9).